The following is a 514-amino-acid chain: Cholesterol side-chain cleavage enzyme, mitochondrial (514 aa).

A mitochondrion-targeting transit peptide spans 1–39 (MMVSWSVCRSSLALPACGLPSARHNSSMPVVRQALSPDN). C458 is a heme binding site.

Belongs to the cytochrome P450 family. Heme is required as a cofactor. In terms of tissue distribution, in the ovary, not found in early vitellogenic follicles, barely detected in postvitellogenic follicles and abundant in post-ovulatory follicles.

The protein localises to the mitochondrion inner membrane. It carries out the reaction 6 reduced [adrenodoxin] + cholesterol + 3 O2 + 6 H(+) = 4-methylpentanal + pregnenolone + 6 oxidized [adrenodoxin] + 4 H2O. It functions in the pathway lipid metabolism; C21-steroid hormone metabolism. Catalyzes the side-chain cleavage reaction of cholesterol to pregnenolone, the precursor of most steroid hormones. The protein is Cholesterol side-chain cleavage enzyme, mitochondrial (cyp11a1) of Oncorhynchus mykiss (Rainbow trout).